We begin with the raw amino-acid sequence, 316 residues long: Olfactory receptor 2AG2 (316 aa).

Over Met-1–Thr-30 the chain is Extracellular. Residues Asn-5 and Asn-19 are each glycosylated (N-linked (GlcNAc...) asparagine). Residues Phe-31–Ile-51 form a helical membrane-spanning segment. At Glu-52 to His-56 the chain is on the cytoplasmic side. A helical membrane pass occupies residues Met-57–Val-77. Residues Thr-78 to Cys-97 lie on the Extracellular side of the membrane. An intrachain disulfide couples Cys-97 to Cys-179. Residues Ala-98 to Met-118 traverse the membrane as a helical segment. Residues Ala-119 to Arg-139 are Cytoplasmic-facing. A helical membrane pass occupies residues Val-140–Thr-160. Topologically, residues Met-161–Thr-205 are extracellular. The helical transmembrane segment at Phe-206–Leu-226 threads the bilayer. The Cytoplasmic portion of the chain corresponds to Arg-227 to His-244. A helical transmembrane segment spans residues Leu-245–Phe-265. The Extracellular portion of the chain corresponds to His-266–Asp-271. The helical transmembrane segment at Asn-272–Leu-292 threads the bilayer. Residues Arg-293 to Leu-316 are Cytoplasmic-facing.

The protein belongs to the G-protein coupled receptor 1 family.

It localises to the cell membrane. Its function is as follows. Odorant receptor. This is Olfactory receptor 2AG2 (OR2AG2) from Homo sapiens (Human).